The sequence spans 397 residues: Elongation factor Tu (397 aa).

The tr-type G domain maps to 10–207; the sequence is KPHCNIGTIG…EVDKYIPQPE (198 aa). The tract at residues 19–26 is G1; that stretch reads GHVDHGKT. Residue 19-26 participates in GTP binding; sequence GHVDHGKT. T26 provides a ligand contact to Mg(2+). The segment at 61 to 65 is G2; sequence GITIS. The tract at residues 82–85 is G3; sequence DCPG. Residues 82-86 and 137-140 each bind GTP; these read DCPGH and NKCD. Residues 137–140 are G4; the sequence is NKCD. The segment at 175 to 177 is G5; the sequence is SAL.

Belongs to the TRAFAC class translation factor GTPase superfamily. Classic translation factor GTPase family. EF-Tu/EF-1A subfamily. Monomer.

The protein localises to the cytoplasm. The catalysed reaction is GTP + H2O = GDP + phosphate + H(+). GTP hydrolase that promotes the GTP-dependent binding of aminoacyl-tRNA to the A-site of ribosomes during protein biosynthesis. The protein is Elongation factor Tu of Azorhizobium caulinodans (strain ATCC 43989 / DSM 5975 / JCM 20966 / LMG 6465 / NBRC 14845 / NCIMB 13405 / ORS 571).